The sequence spans 491 residues: Cobyric acid synthase (491 aa).

In terms of domain architecture, GATase cobBQ-type spans 251-444; the sequence is GITIAVIRLP…LHGLFTNDEF (194 aa). Cysteine 329 acts as the Nucleophile in catalysis. Histidine 436 is an active-site residue.

Belongs to the CobB/CobQ family. CobQ subfamily.

It functions in the pathway cofactor biosynthesis; adenosylcobalamin biosynthesis. Its function is as follows. Catalyzes amidations at positions B, D, E, and G on adenosylcobyrinic A,C-diamide. NH(2) groups are provided by glutamine, and one molecule of ATP is hydrogenolyzed for each amidation. The protein is Cobyric acid synthase of Chloroflexus aggregans (strain MD-66 / DSM 9485).